A 264-amino-acid polypeptide reads, in one-letter code: 3-methyl-2-oxobutanoate hydroxymethyltransferase (264 aa).

Mg(2+) contacts are provided by aspartate 45 and aspartate 84. Residues 45-46 (DS), aspartate 84, and lysine 112 contribute to the 3-methyl-2-oxobutanoate site. Glutamate 114 contributes to the Mg(2+) binding site. The active-site Proton acceptor is glutamate 181.

It belongs to the PanB family. In terms of assembly, homodecamer; pentamer of dimers. It depends on Mg(2+) as a cofactor.

It localises to the cytoplasm. It catalyses the reaction 3-methyl-2-oxobutanoate + (6R)-5,10-methylene-5,6,7,8-tetrahydrofolate + H2O = 2-dehydropantoate + (6S)-5,6,7,8-tetrahydrofolate. Its pathway is cofactor biosynthesis; (R)-pantothenate biosynthesis; (R)-pantoate from 3-methyl-2-oxobutanoate: step 1/2. Its function is as follows. Catalyzes the reversible reaction in which hydroxymethyl group from 5,10-methylenetetrahydrofolate is transferred onto alpha-ketoisovalerate to form ketopantoate. The protein is 3-methyl-2-oxobutanoate hydroxymethyltransferase of Pseudoalteromonas translucida (strain TAC 125).